The chain runs to 928 residues: TBC1 domain family member 2A (928 aa).

Met1 bears the N-acetylmethionine mark. A compositionally biased stretch (low complexity) spans 1–19 (MEGAGENAPESSSSAPGSE). Residues 1 to 39 (MEGAGENAPESSSSAPGSEESARDPQVPPPEEESGDCAR) form a disordered region. An interaction with CADH1 region spans residues 1–169 (MEGAGENAPE…AGNGPVLHLE (169 aa)). In terms of domain architecture, PH spans 45-142 (PKKLCGYLSK…WLQQLQMKRW (98 aa)). The tract at residues 225–275 (NKQAQGTGHEPPGEDSPQSGEPQREEQPLASDASTPGREPEDSPKPAPKPS) is disordered. Positions 295-433 (SEGITRNRTA…KVTQDFTHPP (139 aa)) are interaction with RAC1. The stretch at 298 to 416 (ITRNRTAQEK…LMDKNHAKQQ (119 aa)) forms a coiled coil. Ser436 carries the post-translational modification Phosphoserine. One can recognise a Rab-GAP TBC domain in the interval 625–817 (GVPREHRPRV…RVWDAFLYEG (193 aa)). Residues 875–913 (MKQLRQLRMVHRERLEAELRELEQLKAEYLERRASRRRA) are a coiled coil. A phosphoserine mark is found at Ser915 and Ser920.

Interacts with activated RAC1 and CDH1. As to expression, expressed in a broad range of tissues, especially in kidney, liver, lung and placenta. Also expressed in keratinocytes and epithelia-containing organs. Isoform 2 is differentially expressed in prostate normal and cancer cells (at protein level).

It is found in the cytoplasm. The protein localises to the cytoplasmic vesicle. The protein resides in the cell junction. Acts as a GTPase-activating protein for RAB7A. Signal effector acting as a linker between RAC1 and RAB7A, leading to RAB7A inactivation and subsequent inhibition of cadherin degradation and reduced cell-cell adhesion. The polypeptide is TBC1 domain family member 2A (TBC1D2) (Homo sapiens (Human)).